The chain runs to 224 residues: Deoxyribose-phosphate aldolase (224 aa).

Residue aspartate 92 is the Proton donor/acceptor of the active site. Lysine 155 acts as the Schiff-base intermediate with acetaldehyde in catalysis. Lysine 184 acts as the Proton donor/acceptor in catalysis.

The protein belongs to the DeoC/FbaB aldolase family. DeoC type 1 subfamily.

The protein resides in the cytoplasm. The enzyme catalyses 2-deoxy-D-ribose 5-phosphate = D-glyceraldehyde 3-phosphate + acetaldehyde. The protein operates within carbohydrate degradation; 2-deoxy-D-ribose 1-phosphate degradation; D-glyceraldehyde 3-phosphate and acetaldehyde from 2-deoxy-alpha-D-ribose 1-phosphate: step 2/2. In terms of biological role, catalyzes a reversible aldol reaction between acetaldehyde and D-glyceraldehyde 3-phosphate to generate 2-deoxy-D-ribose 5-phosphate. The protein is Deoxyribose-phosphate aldolase of Shouchella clausii (strain KSM-K16) (Alkalihalobacillus clausii).